Reading from the N-terminus, the 187-residue chain is Small ribosomal subunit protein uS7 (187 aa).

It belongs to the universal ribosomal protein uS7 family. As to quaternary structure, part of the 30S ribosomal subunit.

One of the primary rRNA binding proteins, it binds directly to 16S rRNA where it nucleates assembly of the head domain of the 30S subunit. Is located at the subunit interface close to the decoding center. The sequence is that of Small ribosomal subunit protein uS7 from Methanosphaera stadtmanae (strain ATCC 43021 / DSM 3091 / JCM 11832 / MCB-3).